Consider the following 419-residue polypeptide: POU domain, class 4, transcription factor 1 (419 aa).

Residues 57-66 carry the POU-IV box motif; that stretch reads RAEALAAVDI. Disordered stretches follow at residues 94-117 and 131-197; these read STVP…GDLL and AGGA…HSLG. Residues 99–108 are compositionally biased toward basic residues; it reads AHHHHHHHHH. Positions 131-184 are enriched in gly residues; the sequence is AGGAGAAAGGGGAHDGPGGGGGPGGGGGPGGGPGGGGGGGPGGGGGGPGGGLLG. The 78-residue stretch at 261 to 338 folds into the POU-specific domain; sequence SDTDPRELEA…LQAWLEEAEG (78 aa). A DNA-binding region (homeobox) is located at residues 356–415; the sequence is KRKRTSIAAPEKRSLEAYFAVQPRPSSEKIAAIAEKLDLKKNVVRVWFCNQRQKQKRMKF.

Belongs to the POU transcription factor family. Class-4 subfamily. Interacts (via N-terminus) with RIT2; the interaction controls POU4F1 transactivation activity on some neuronal target genes. Isoform 1 interacts with POU4F2; this interaction inhibits both POU4F1 DNA-binding and transcriptional activities. Isoform 1 interacts (C-terminus) with ESR1 (via DNA-binding domain); this interaction decreases the estrogen receptor ESR1 transcriptional activity in a DNA- and ligand 17-beta-estradiol-independent manner. As to expression, expressed in the brain and the retina. Present in the developing brain, spinal cord and eye.

It localises to the nucleus. The protein localises to the cytoplasm. Its function is as follows. Multifunctional transcription factor with different regions mediating its different effects. Acts by binding (via its C-terminal domain) to sequences related to the consensus octamer motif 5'-ATGCAAAT-3' in the regulatory regions of its target genes. Regulates the expression of specific genes involved in differentiation and survival within a subset of neuronal lineages. It has been shown that activation of some of these genes requires its N-terminal domain, maybe through a neuronal-specific cofactor. Activates BCL2 expression and protects neuronal cells from apoptosis (via the N-terminal domain). Induces neuronal process outgrowth and the coordinate expression of genes encoding synaptic proteins. Exerts its major developmental effects in somatosensory neurons and in brainstem nuclei involved in motor control. Stimulates the binding affinity of the nuclear estrogene receptor ESR1 to DNA estrogen response element (ERE), and hence modulates ESR1-induced transcriptional activity. May positively regulate POU4F2 and POU4F3. Regulates dorsal root ganglion sensory neuron specification and axonal projection into the spinal cord. Plays a role in TNFSF11-mediated terminal osteoclast differentiation. Negatively regulates its own expression interacting directly with a highly conserved autoregulatory domain surrounding the transcription initiation site. Able to act as transcription factor, cannot regulate the expression of the same subset of genes than isoform 1. Does not have antiapoptotic effect on neuronal cells. This is POU domain, class 4, transcription factor 1 from Homo sapiens (Human).